A 238-amino-acid chain; its full sequence is Response regulator receiver protein Anae109_2439 (238 aa).

Response regulatory domains lie at 3–117 and 121–228; these read RYLI…AAAR and LVAV…ERLH. D52 and D169 each carry 4-aspartylphosphate.

Is diphosphorylated by GchK.

In terms of biological role, member of the two-component regulatory system GcHK/Anae109_2439. Is involved in a signal transduction system responding to oxygen availability. In Anaeromyxobacter sp. (strain Fw109-5), this protein is Response regulator receiver protein Anae109_2439.